A 481-amino-acid chain; its full sequence is Aspartyl/glutamyl-tRNA(Asn/Gln) amidotransferase subunit B (481 aa).

It belongs to the GatB/GatE family. GatB subfamily. Heterotrimer of A, B and C subunits.

It carries out the reaction L-glutamyl-tRNA(Gln) + L-glutamine + ATP + H2O = L-glutaminyl-tRNA(Gln) + L-glutamate + ADP + phosphate + H(+). The enzyme catalyses L-aspartyl-tRNA(Asn) + L-glutamine + ATP + H2O = L-asparaginyl-tRNA(Asn) + L-glutamate + ADP + phosphate + 2 H(+). Functionally, allows the formation of correctly charged Asn-tRNA(Asn) or Gln-tRNA(Gln) through the transamidation of misacylated Asp-tRNA(Asn) or Glu-tRNA(Gln) in organisms which lack either or both of asparaginyl-tRNA or glutaminyl-tRNA synthetases. The reaction takes place in the presence of glutamine and ATP through an activated phospho-Asp-tRNA(Asn) or phospho-Glu-tRNA(Gln). The polypeptide is Aspartyl/glutamyl-tRNA(Asn/Gln) amidotransferase subunit B (Pseudomonas fluorescens (strain Pf0-1)).